The following is a 118-amino-acid chain: Cell division protein FtsB (118 aa).

At 1-3 (MRL) the chain is on the cytoplasmic side. The helical transmembrane segment at 4-21 (LFLVLLVLLGLIQYPLWL) threads the bilayer. At 22–118 (GKGGWFKVWD…PRPPATPPRR (97 aa)) the chain is on the periplasmic side. A coiled-coil region spans residues 28-62 (KVWDLQRQVAEQRETNDGLRARNTALEAEVRDLAT). The interval 88–118 (LPPGTPLPSDNSTPQASALSKPRPPATPPRR) is disordered. The segment covering 95-105 (PSDNSTPQASA) has biased composition (polar residues). The segment covering 109-118 (PRPPATPPRR) has biased composition (pro residues).

It belongs to the FtsB family. As to quaternary structure, part of a complex composed of FtsB, FtsL and FtsQ.

Its subcellular location is the cell inner membrane. Essential cell division protein. May link together the upstream cell division proteins, which are predominantly cytoplasmic, with the downstream cell division proteins, which are predominantly periplasmic. The protein is Cell division protein FtsB of Bordetella bronchiseptica (strain ATCC BAA-588 / NCTC 13252 / RB50) (Alcaligenes bronchisepticus).